A 316-amino-acid chain; its full sequence is MAKRDGMKLRDELTFDTSRAVKAVSWGEAIDRFQSWYDDQRGTQIVVENELGETVGFDMPNRFTPEYREMLYAKAQSLERGLRERWGSLLHTGMVTLTASSTDDEGRLRPPLEHFEDLLESWEAVRRALARVLEGREWEYLAILEPHESGYVHIHLGVFVRGPVVAEQFEPVLDAHLRNCPTAGEDAHQVFDENGDEDAVRVRRSSHPSRSGGVENLGAYLAAYMAGEYGSEPSEMPENVRAFYATMWASGRQWFRPSNGAQELMQPEEDDEGDSIEEWEMVGIAPEGDLGDIIEVDPSEPRSDPYRRLRTPPPGG.

The disordered stretch occupies residues 285–316; that stretch reads APEGDLGDIIEVDPSEPRSDPYRRLRTPPPGG. Over residues 289 to 298 the composition is skewed to acidic residues; it reads DLGDIIEVDP.

Possibly necessary for replication. This is an uncharacterized protein from Halobacterium salinarum (Halobacterium halobium).